The following is a 144-amino-acid chain: MACGENERASTSPPNRAAAARGGRLTLLDGCCVALVLALTAWSGFFVYRMQGGARTLDIRCGAQRWTYPLDQERVIRVRGPLGETEIEIRAGAARVCRSPCANGTCIAHPPVQRVGEWNACLPNGVFLYVHGTDAAEPEADAVQ.

A helical membrane pass occupies residues 25-47 (LTLLDGCCVALVLALTAWSGFFV).

It is found in the membrane. This is an uncharacterized protein from Treponema pallidum (strain Nichols).